Consider the following 184-residue polypeptide: Photosystem I assembly protein Ycf4 (184 aa).

A run of 2 helical transmembrane segments spans residues 22–42 and 57–77; these read FCWA…GTSS and IIFF…LFIS.

Belongs to the Ycf4 family.

The protein resides in the plastid. It localises to the chloroplast thylakoid membrane. Its function is as follows. Seems to be required for the assembly of the photosystem I complex. The protein is Photosystem I assembly protein Ycf4 of Arabis hirsuta (Hairy rock-cress).